The sequence spans 239 residues: Sugar fermentation stimulation protein homolog (239 aa).

It belongs to the SfsA family.

This is Sugar fermentation stimulation protein homolog from Synechococcus sp. (strain JA-2-3B'a(2-13)) (Cyanobacteria bacterium Yellowstone B-Prime).